A 230-amino-acid chain; its full sequence is Ion-translocating oxidoreductase complex subunit E (230 aa).

Residues 1 to 17 (MSENRTLMLNGMWNNNP) are Cytoplasmic-facing. Transmembrane regions (helical) follow at residues 18-38 (ALVQLLGLCPLLAVSSTVTNA) and 39-59 (LGLGIATLLVLVGSNVTVSLV). At 60-68 (RDYVPKEVR) the chain is on the cytoplasmic side. Residues 69–89 (IPVFVMIIASLVTCVQLLMNA) form a helical membrane-spanning segment. The Periplasmic portion of the chain corresponds to 90-92 (YAY). Residues 93–113 (GLYLSLGIFIPLIVTNCIIIG) form a helical membrane-spanning segment. Over 114-123 (RAEAFASKND) the chain is Cytoplasmic. The chain crosses the membrane as a helical span at residues 124–144 (VLPAALDGFWMGLGMTSVLVV). Residues 145–181 (LGSLREIIGNGTLFDGADLLLGEWAKVLRIEVFHFDS) are Periplasmic-facing. The helical transmembrane segment at 182–202 (AFLLALLPPGAFIGVGFLIAA) threads the bilayer. Residues 203-230 (KSVIDKQIAARQPKQQKQAIERARVTNV) lie on the Cytoplasmic side of the membrane.

It belongs to the NqrDE/RnfAE family. The complex is composed of six subunits: RnfA, RnfB, RnfC, RnfD, RnfE and RnfG.

The protein localises to the cell inner membrane. Functionally, part of a membrane-bound complex that couples electron transfer with translocation of ions across the membrane. The sequence is that of Ion-translocating oxidoreductase complex subunit E from Vibrio cholerae serotype O1 (strain ATCC 39541 / Classical Ogawa 395 / O395).